The sequence spans 305 residues: NAD kinase (305 aa).

The active-site Proton acceptor is Asp-84. Residues 84–85 (DG), 159–160 (NE), His-170, Arg-187, Asp-189, 200–205 (TAYSLS), and Gln-260 each bind NAD(+).

The protein belongs to the NAD kinase family. The cofactor is a divalent metal cation.

It is found in the cytoplasm. The enzyme catalyses NAD(+) + ATP = ADP + NADP(+) + H(+). Involved in the regulation of the intracellular balance of NAD and NADP, and is a key enzyme in the biosynthesis of NADP. Catalyzes specifically the phosphorylation on 2'-hydroxyl of the adenosine moiety of NAD to yield NADP. This is NAD kinase from Pasteurella multocida (strain Pm70).